We begin with the raw amino-acid sequence, 256 residues long: CD209 antigen-like protein 2 (256 aa).

Residues 1–50 lie on the Cytoplasmic side of the membrane; the sequence is MSDSKEPRAQPLGLLEEEELITSSMNFFPRDFGFRQTRGYKSLAGCLGHA. Residues 14 to 15 carry the Endocytosis signal motif; that stretch reads LL. The chain crosses the membrane as a helical; Signal-anchor for type II membrane protein span at residues 51 to 71; the sequence is PLVLPLLFFTLFTGLLVAILV. The Extracellular segment spans residues 72-240; the sequence is QVSKNPSSQR…KSAASCSRDE (169 aa). 3 cysteine pairs are disulfide-bonded: Cys-108–Cys-119, Cys-136–Cys-229, and Cys-208–Cys-221. The region spanning 114-230 is the C-type lectin domain; the sequence is FFQGNCYFIS…CSAAKFWICK (117 aa). Ca(2+)-binding residues include Glu-199, Asn-201, Ile-203, Glu-206, Asn-217, and Asp-218.

Predominantly expressed in liver and axillary lymph nodes. At very low levels also found in other tissues.

The protein localises to the membrane. Its function is as follows. Probable pathogen-recognition receptor involved in peripheral immune surveillance in liver. May mediate the endocytosis of pathogens which are subsequently degraded in lysosomal compartments. Probably recognizes in a calcium-dependent manner high mannose N-linked oligosaccharides in a variety of pathogen antigens. Is a receptor for ICAM3, probably by binding to mannose-like carbohydrates. The polypeptide is CD209 antigen-like protein 2 (CD209L2) (Macaca mulatta (Rhesus macaque)).